Here is a 217-residue protein sequence, read N- to C-terminus: MNQTLLSSFGTPFERVENALAALREGRGVMVLDDEDRENEGDMIFPAETMTVEQMALTIRHGSGIVCLCITEDRRKQLDLPMMVENNTSAYGTGFTVTIEAAEGVTTGVSAADRITTVRAAIADDAKPSDLNRPGHVFPLRAQAGGVLTRGGHTEATIDLMTLAGFKPAGVLCELTNDDGTMARAPECIEFANKHNMALVTIEDLVAYRQAHERKAS.

D-ribulose 5-phosphate is bound by residues 37 to 38, Asp42, 150 to 154, and Glu174; these read RE and RGGHT. Glu38 lines the Mg(2+) pocket. His153 contacts Mg(2+).

The protein belongs to the DHBP synthase family. In terms of assembly, homodimer. It depends on Mg(2+) as a cofactor. Mn(2+) is required as a cofactor.

The catalysed reaction is D-ribulose 5-phosphate = (2S)-2-hydroxy-3-oxobutyl phosphate + formate + H(+). It functions in the pathway cofactor biosynthesis; riboflavin biosynthesis; 2-hydroxy-3-oxobutyl phosphate from D-ribulose 5-phosphate: step 1/1. In terms of biological role, catalyzes the conversion of D-ribulose 5-phosphate to formate and 3,4-dihydroxy-2-butanone 4-phosphate. This chain is 3,4-dihydroxy-2-butanone 4-phosphate synthase, found in Escherichia coli O17:K52:H18 (strain UMN026 / ExPEC).